A 242-amino-acid chain; its full sequence is RNA transcription, translation and transport factor protein (242 aa).

This sequence belongs to the RTRAF family. As to quaternary structure, homodimer. Component of a tRNA-splicing ligase complex.

The protein resides in the nucleus. It localises to the cytoplasm. Its subcellular location is the cytosol. It is found in the perinuclear region. The protein localises to the cytoskeleton. The protein resides in the microtubule organizing center. It localises to the centrosome. In terms of biological role, RNA-binding protein involved in modulation of mRNA transcription by Polymerase II. Component of the tRNA-splicing ligase complex. The polypeptide is RNA transcription, translation and transport factor protein (Danio rerio (Zebrafish)).